Reading from the N-terminus, the 431-residue chain is Tol-Pal system protein TolB (431 aa).

The N-terminal stretch at 1–19 (MKRLLFFLICVFFSKTSYS) is a signal peptide.

It belongs to the TolB family. The Tol-Pal system is composed of five core proteins: the inner membrane proteins TolA, TolQ and TolR, the periplasmic protein TolB and the outer membrane protein Pal. They form a network linking the inner and outer membranes and the peptidoglycan layer.

It localises to the periplasm. Functionally, part of the Tol-Pal system, which plays a role in outer membrane invagination during cell division and is important for maintaining outer membrane integrity. TolB occupies a key intermediary position in the Tol-Pal system because it communicates directly with both membrane-embedded components, Pal in the outer membrane and TolA in the inner membrane. The protein is Tol-Pal system protein TolB of Wigglesworthia glossinidia brevipalpis.